The chain runs to 928 residues: Nuclear pore complex-interacting protein family member B12 (928 aa).

Residues 73–93 form a helical membrane-spanning segment; that stretch reads VVITLWIVYLWVSLLKTIFWS. Disordered stretches follow at residues 242–452 and 663–928; these read RMGH…NIKT and ERLR…RRLS. A compositionally biased stretch (polar residues) spans 252 to 263; it reads QQHSITDNSLSL. Pro residues predominate over residues 349–359; that stretch reads PLPPSAPPSAP. Basic and acidic residues-rich tracts occupy residues 406–416, 698–708, 740–750, and 782–792; these read DNIKTPAERLR.

Belongs to the NPIP family.

The protein localises to the membrane. The protein is Nuclear pore complex-interacting protein family member B12 of Homo sapiens (Human).